Here is a 480-residue protein sequence, read N- to C-terminus: Ochratoxinase (480 aa).

The Zn(2+) site is built by His-111, His-113, Lys-246, His-287, and His-307. Lys-246 is a catalytic residue. Asp-378 is an active-site residue.

This sequence belongs to the metallo-dependent hydrolases superfamily. Ochratoxinase amidase 2 family. In terms of assembly, homooctamer. It depends on Zn(2+) as a cofactor.

The protein resides in the secreted. It carries out the reaction ochratoxin A + H2O = ochratoxin alpha + L-phenylalanine. With respect to regulation, the Zn(2+)-specific chelator 1,10-phenanthroline inhibits the enzyme activity. Its function is as follows. Carboxypeptidase that catalyzes the release of a C-terminal amino acid with specific catalytic activity for aromatic amino acids such as phenylalanine. Is able to degrade ochratoxin A, one of the five major mycotoxins most harmful to humans and animals that is produced by Aspergillus and Penicillium species and occurs in a wide range of agricultural products. The sequence is that of Ochratoxinase from Aspergillus niger (strain ATCC 1015 / CBS 113.46 / FGSC A1144 / LSHB Ac4 / NCTC 3858a / NRRL 328 / USDA 3528.7).